A 23-amino-acid chain; its full sequence is Caerulein precursor fragment BM2 (23 aa).

Expressed by the skin glands.

It is found in the secreted. Its function is as follows. Antimicrobial peptide. The sequence is that of Caerulein precursor fragment BM2 from Xenopus boumbaensis (Mawa clawed frog).